A 66-amino-acid polypeptide reads, in one-letter code: KEGYLVNHSTGCKYECFKLGDNDYCLRECRQQYGKGAGGYCYAFGCWCTHLYEQAVVWPLPKKTCN.

Residues 1-66 form the LCN-type CS-alpha/beta domain; the sequence is KEGYLVNHST…VWPLPKKTCN (66 aa). 4 cysteine pairs are disulfide-bonded: Cys-12/Cys-65, Cys-16/Cys-41, Cys-25/Cys-46, and Cys-29/Cys-48. Position 66 is an asparagine amide (Asn-66).

Expressed by the venom gland.

The protein resides in the secreted. In terms of biological role, beta toxins bind voltage independently at site-4 of sodium channels (Nav) and shift the activation voltage toward more negative potentials, thereby affecting sodium channel activation CC and promoting spontaneous and repetitive firing. This Centruroides hirsutipalpus (Scorpion) protein is Beta-toxin ChFII.7.